Reading from the N-terminus, the 891-residue chain is Alanine--tRNA ligase (891 aa).

The Zn(2+) site is built by histidine 564, histidine 568, cysteine 681, and histidine 685.

It belongs to the class-II aminoacyl-tRNA synthetase family. Requires Zn(2+) as cofactor.

It is found in the cytoplasm. The catalysed reaction is tRNA(Ala) + L-alanine + ATP = L-alanyl-tRNA(Ala) + AMP + diphosphate. Catalyzes the attachment of alanine to tRNA(Ala) in a two-step reaction: alanine is first activated by ATP to form Ala-AMP and then transferred to the acceptor end of tRNA(Ala). Also edits incorrectly charged Ser-tRNA(Ala) and Gly-tRNA(Ala) via its editing domain. In Methylorubrum extorquens (strain PA1) (Methylobacterium extorquens), this protein is Alanine--tRNA ligase.